Reading from the N-terminus, the 475-residue chain is Terminase, large subunit (475 aa).

An interaction with the terminase small subunit region spans residues 1–58; it reads MELDAILDNLSDEEQIELLELLEEEENYRNTHLLYEFTPYSKQREFIDAGHDYQSDVL. The interval 1 to 282 is ATPase activity; sequence MELDAILDNL…EHEREARARG (282 aa). Residues 308-475 form a nuclease activity region; that stretch reads DHFYVIDAQD…MRLRQDDARY (168 aa). Aspartate 317 and aspartate 455 together coordinate Mg(2+).

It belongs to the Lederbergvirus large terminase family. As to quaternary structure, interacts with the terminase small subunit; the active complex is composed of dimer of terminase large subunits and a nonamer ring of terminase small subunits. Interacts with the portal protein; this interaction allows the packaging of viral DNA. Mg(2+) is required as a cofactor.

Its function is as follows. The terminase large subunit acts as an ATP driven molecular motor necessary for viral DNA translocation into empty capsids and as an endonuclease that cuts the viral genome to initiate and to end a packaging reaction. The terminase lies at a unique vertex of the procapsid and is composed of two subunits, a small terminase subunit involved in viral DNA recognition (packaging 'pac' sequence), and a large terminase subunit possessing endonucleolytic and ATPase activities. Both terminase subunits heterooligomerize and are docked on the portal protein to form the packaging machine. The terminase large subunit exhibits endonuclease activity and cleaves the viral genome concatemer once the capsid is full (headful packaging). Once the capsid is packaged with the DNA, the terminase complex is substituted by the tail. The protein is Terminase, large subunit (2) of Salmonella (Bacteriophage LP7).